Consider the following 494-residue polypeptide: Aldehyde dehydrogenase family 7 member A1 (494 aa).

Position 247–252 (247–252) interacts with NAD(+); that stretch reads GSSKVG. E269 functions as the Proton acceptor in the catalytic mechanism. Catalysis depends on C303, which acts as the Nucleophile.

This sequence belongs to the aldehyde dehydrogenase family. Homotetramer.

The catalysed reaction is an aldehyde + NAD(+) + H2O = a carboxylate + NADH + 2 H(+). This chain is Aldehyde dehydrogenase family 7 member A1 (BTG-26), found in Brassica napus (Rape).